Reading from the N-terminus, the 871-residue chain is Pentatricopeptide repeat-containing protein DOT4, chloroplastic (871 aa).

The N-terminal 28 residues, 1-28 (MAMLVTNLSSSSFCFFSSPHLQNQKEIR), are a transit peptide targeting the chloroplast. 18 PPR repeats span residues 60–94 (SVTD…DIDP), 96–127 (TLCS…GFVI), 128–158 (DSNL…VKIE), 159–193 (KALF…GVEM), 194–228 (DSYT…GFGE), 229–259 (RNSV…MTER), 260–294 (DVIS…GIEI), 295–329 (DLAT…CFSR), 330–360 (EDRF…MSDR), 361–395 (SVVS…GISP), 396–430 (DVYT…DLGF), 431–465 (DIFV…DIIS), 466–497 (WNTI…RFSP), 498–532 (DERT…GYFS), 533–563 (DRHV…IASK), 564–598 (DLVS…GIEA), 599–629 (DEIS…MRHE), and 635–665 (TVEH…MPIP). Residues 670–745 (IWGALLCGCR…NPGCSWIEIK (76 aa)) are type E motif. The tract at residues 746-776 (GRVNIFVAGDSSNPETENIEAFLRKVRARMI) is type E(+) motif. A type DYW motif region spans residues 777–871 (EEGYSPLTKY…DGHCSCRGFW (95 aa)).

It belongs to the PPR family. PCMP-H subfamily. Zn(2+) is required as a cofactor. As to expression, weakly expressed in leaves.

The protein resides in the plastid. The protein localises to the chloroplast. Plays a major role in single RNA editing events in chloroplasts. Acts as a site-recognition transacting factor involved in the edition of the unique site (corresponding to cytidine-488) of rpoC1, which is a plastid-encoded subunit of the chloroplast DNA-directed RNA polymerase. May provide the catalytic activity for editing site conversion. Involved in leaf vasculature patterning. The sequence is that of Pentatricopeptide repeat-containing protein DOT4, chloroplastic from Arabidopsis thaliana (Mouse-ear cress).